The following is a 1733-amino-acid chain: Desertorin synthase (1733 aa).

The tract at residues 21–358 is N-terminal acylcarrier protein transacylase domain (SAT); the sequence is RIRQQSRSSR…HAPTRDLTEW (338 aa). The Ketosynthase family 3 (KS3) domain maps to 372–799; sequence DCRIAVVGMS…GGNTALLLEE (428 aa). Positions 406–422 are enriched in basic and acidic residues; the sequence is HVPPDRYDVQSHTDPTG. The tract at residues 406–429 is disordered; that stretch reads HVPPDRYDVQSHTDPTGRRMNTSQ. Active-site for beta-ketoacyl synthase activity residues include cysteine 544, histidine 679, and histidine 718. Residues 903–1211 are malonyl-CoA:ACP transacylase (MAT) domain; it reads FVFSGQGSFY…DNWHTLAGSM (309 aa). The segment at 1288–1420 is N-terminal hotdog fold; the sequence is HRIVEETFWA…GTVSVGNAAS (133 aa). The PKS/mFAS DH domain maps to 1288–1598; that stretch reads HRIVEETFWA…LRPLPRILMH (311 aa). Residues 1299 to 1594 are product template (PT) domain; it reads GGRVVMESNV…AGVTLRPLPR (296 aa). The active-site Proton acceptor; for dehydratase activity is the histidine 1320. A C-terminal hotdog fold region spans residues 1448–1598; sequence ADRLTRDTVY…LRPLPRILMH (151 aa). The active-site Proton donor; for dehydratase activity is the aspartate 1506. A disordered region spans residues 1608-1659; it reads HNWGNSPAKPEAKPEMVPTSGSSSAAGSPSGSSAGPLSIPERLADPSETSFQ. The segment covering 1627–1643 has biased composition (low complexity); that stretch reads SGSSSAAGSPSGSSAGP. Residues 1659–1733 enclose the Carrier domain; sequence QSKASKVSKA…TVGEVKRQML (75 aa). Residue serine 1696 is modified to O-(pantetheine 4'-phosphoryl)serine.

Pantetheine 4'-phosphate serves as cofactor.

It functions in the pathway secondary metabolite biosynthesis. Non-reducing polyketide synthase; part of the gene cluster that mediates the biosynthesis of the bicoumarin desertorin. The non-reducing polyketide synthase desS first catalyzes the formation of the pentaketidic 4,7-dihydroxy-5-methylcoumarin from acetyl coenzyme A and 4 malonyl coenzyme A molecules. Further O-methylation by desB leads to the formation of 7-demethylsiderin. Then, an oxidative phenol coupling catalyzed by the cytochrome P450 monooxygenase desC forms the 6,8'-dimer M-desertorin A via dimerization the monomeric precursor, 7-demethylsiderin. M-desertorin A is further converted to M-desertorin C. This chain is Desertorin synthase, found in Aspergillus desertorum (Emericella desertorum).